The following is an 87-amino-acid chain: Small ribosomal subunit protein bS20 (87 aa).

The disordered stretch occupies residues 1 to 22 (MANIKSQIKRNKTNEKARLRNQ).

Belongs to the bacterial ribosomal protein bS20 family.

Binds directly to 16S ribosomal RNA. The polypeptide is Small ribosomal subunit protein bS20 (Corynebacterium glutamicum (strain R)).